Reading from the N-terminus, the 66-residue chain is Defensin-B1 (66 aa).

Positions 1–23 (MNAHVLLLCTILFLLVHTPPVLG) are cleaved as a signal peptide. 3 disulfides stabilise this stretch: cysteine 29–cysteine 56, cysteine 36–cysteine 50, and cysteine 40–cysteine 57. Residues 61–66 (VLMEDG) constitute a propeptide that is removed on maturation.

It belongs to the beta-defensin family. As to expression, expressed at low levels in kidney, lung, and spleen.

It is found in the secreted. Functionally, has bactericidal activity. May act as a ligand for C-C chemokine receptor CCR6. Positively regulates the sperm motility and bactericidal activity in a CCR6-dependent manner. Binds to CCR6 and triggers Ca2+ mobilization in the sperm which is important for its motility. This chain is Defensin-B1, found in Ornithorhynchus anatinus (Duckbill platypus).